The following is an 83-amino-acid chain: Small ribosomal subunit protein uS17 (83 aa).

Belongs to the universal ribosomal protein uS17 family. In terms of assembly, part of the 30S ribosomal subunit.

Its function is as follows. One of the primary rRNA binding proteins, it binds specifically to the 5'-end of 16S ribosomal RNA. In Chlamydia abortus (strain DSM 27085 / S26/3) (Chlamydophila abortus), this protein is Small ribosomal subunit protein uS17.